The chain runs to 153 residues: MYFKKKYIGLIDKNCEKKILDDSSTIKICYILIGILIGTNMITLIYNFIFWDNYIKCYRNNDKMFYCPNDWVGYNNICYYFSNGSFSKNYTAASNFCRQLNGTLANNDTNLLNLTKIYNNQSMYWVNNTVILRGDNKYSQKVNYTDLLFICGK.

Residues 1–30 are Cytoplasmic-facing; the sequence is MYFKKKYIGLIDKNCEKKILDDSSTIKICY. The helical transmembrane segment at 31 to 51 threads the bilayer; the sequence is ILIGILIGTNMITLIYNFIFW. The Extracellular segment spans residues 52-153; that stretch reads DNYIKCYRNN…YTDLLFICGK (102 aa). The cysteines at positions 67 and 78 are disulfide-linked. N-linked (GlcNAc...) asparagine; by host glycans are attached at residues asparagine 83, asparagine 89, asparagine 101, asparagine 107, asparagine 113, asparagine 120, asparagine 127, and asparagine 143. A disulfide bridge links cysteine 97 with cysteine 151.

It belongs to the asfivirus lectin-like protein family. As to quaternary structure, homodimer.

The protein localises to the host endoplasmic reticulum membrane. In terms of biological role, down-regulates MHC-I expression by impairing the appropriate configuration or presentation into the plasma membrane of the latter. Participates in viral hemadsorption, which may help viral spread. Reduces the transactivating activity of host TP53, thus inhibiting apoptosis. Non-essential for virus growth in swine macrophage cell cultures. The sequence is that of Lectin-like protein EP153R from African swine fever virus (strain Badajoz 1971 Vero-adapted) (Ba71V).